Reading from the N-terminus, the 186-residue chain is MKLTRIQKEKWIPLFAAGLVVVLDQCAKLLVGAYVPTNTSGVRVLGDFVRIVHVYNVGAAFSIGHQLNQVLRTLVLGIVPLIIMFLIVFSYFRTDAFCPVQRWAVSGIIGGGIGNLIDRFLRPNGVLDFIDVKFFGIFGFERWPAFNIADAVIMTCGLLLIISFIKQEKEISSQPSCNETGGVFRT.

3 helical membrane passes run 11-31 (WIPL…KLLV), 44-64 (VLGD…FSIG), and 70-90 (VLRT…IVFS). Catalysis depends on residues Asp128 and Asp150. Residues 145-165 (AFNIADAVIMTCGLLLIISFI) traverse the membrane as a helical segment.

It belongs to the peptidase A8 family.

The protein resides in the cell inner membrane. It carries out the reaction Release of signal peptides from bacterial membrane prolipoproteins. Hydrolyzes -Xaa-Yaa-Zaa-|-(S,diacylglyceryl)Cys-, in which Xaa is hydrophobic (preferably Leu), and Yaa (Ala or Ser) and Zaa (Gly or Ala) have small, neutral side chains.. Its pathway is protein modification; lipoprotein biosynthesis (signal peptide cleavage). This protein specifically catalyzes the removal of signal peptides from prolipoproteins. The chain is Lipoprotein signal peptidase from Treponema pallidum (strain Nichols).